A 1032-amino-acid chain; its full sequence is Serine/threonine-protein kinase ppk31 (1032 aa).

The region spanning 3–72 (NPEQLKRILS…KATDNLFRKS (70 aa)) is the PAS domain. Positions 528–877 (FILLKEINRG…YQEIKKHPFF (350 aa)) constitute a Protein kinase domain. ATP is bound by residues 534-542 (INRGAYGRV) and K557. Catalysis depends on D652, which acts as the Proton acceptor. Residues 938-963 (PKATPADSGTETSNSAAFSASEEETT) form a disordered region. A compositionally biased stretch (low complexity) spans 947–957 (TETSNSAAFSA).

Belongs to the protein kinase superfamily. Ser/Thr protein kinase family.

The protein resides in the cytoplasm. The catalysed reaction is L-seryl-[protein] + ATP = O-phospho-L-seryl-[protein] + ADP + H(+). The enzyme catalyses L-threonyl-[protein] + ATP = O-phospho-L-threonyl-[protein] + ADP + H(+). Its function is as follows. Has a role in meiosis. This Schizosaccharomyces pombe (strain 972 / ATCC 24843) (Fission yeast) protein is Serine/threonine-protein kinase ppk31 (ppk31).